Consider the following 299-residue polypeptide: Mimecan (299 aa).

Residues 1 to 19 form the signal peptide; it reads MKTLQSTLLLFLFVPLIKP. The N-linked (GlcNAc...) (keratan sulfate) asparagine glycan is linked to Asn89. LRR repeat units follow at residues 113 to 132, 133 to 156, 157 to 180, 181 to 200, 201 to 226, 227 to 247, and 248 to 278; these read DAVP…FNKI, KKLT…GNLI, EDIE…ENQL, LKLP…YNKI, KSRG…HNAL, ESVP…FNNI, and TSIT…GNPV. A glycan (N-linked (GlcNAc...) (keratan sulfate) asparagine) is linked at Asn215. Asn246 carries an N-linked (GlcNAc...) asparagine glycan. Residues Cys256 and Cys289 are joined by a disulfide bond. The N-linked (GlcNAc...) (keratan sulfate) asparagine glycan is linked to Asn259.

The protein belongs to the small leucine-rich proteoglycan (SLRP) family. SLRP class III subfamily. Post-translationally, contains keratan sulfate. Keratan sulfate attachment is observed in the cornea but the protein also exists in other tissues without keratan sulfate. In terms of processing, the 12 kDa OIF in bone and the 25 kDa KSPG25 protein in cornea are probably proteolytic fragments. Bone and cornea.

It is found in the secreted. The protein localises to the extracellular space. Its subcellular location is the extracellular matrix. Its function is as follows. Induces bone formation in conjunction with TGF-beta-1 or TGF-beta-2. In Bos taurus (Bovine), this protein is Mimecan (OGN).